Reading from the N-terminus, the 313-residue chain is Homoserine O-succinyltransferase (313 aa).

Cys-142 functions as the Acyl-thioester intermediate in the catalytic mechanism. Lys-163 and Ser-192 together coordinate substrate. The Proton acceptor role is filled by His-235. Glu-237 is a catalytic residue. Arg-249 contributes to the substrate binding site.

The protein belongs to the MetA family.

It is found in the cytoplasm. The enzyme catalyses L-homoserine + succinyl-CoA = O-succinyl-L-homoserine + CoA. The protein operates within amino-acid biosynthesis; L-methionine biosynthesis via de novo pathway; O-succinyl-L-homoserine from L-homoserine: step 1/1. Functionally, transfers a succinyl group from succinyl-CoA to L-homoserine, forming succinyl-L-homoserine. In Vibrio vulnificus (strain CMCP6), this protein is Homoserine O-succinyltransferase.